The following is a 330-amino-acid chain: Lipoyl synthase (330 aa).

[4Fe-4S] cluster contacts are provided by C55, C60, C66, C81, C85, C88, and S292. The Radical SAM core domain maps to 67-281 (WEDREATFLI…AEEAREIGFV (215 aa)).

This sequence belongs to the radical SAM superfamily. Lipoyl synthase family. [4Fe-4S] cluster serves as cofactor.

The protein resides in the cytoplasm. It carries out the reaction [[Fe-S] cluster scaffold protein carrying a second [4Fe-4S](2+) cluster] + N(6)-octanoyl-L-lysyl-[protein] + 2 oxidized [2Fe-2S]-[ferredoxin] + 2 S-adenosyl-L-methionine + 4 H(+) = [[Fe-S] cluster scaffold protein] + N(6)-[(R)-dihydrolipoyl]-L-lysyl-[protein] + 4 Fe(3+) + 2 hydrogen sulfide + 2 5'-deoxyadenosine + 2 L-methionine + 2 reduced [2Fe-2S]-[ferredoxin]. The protein operates within protein modification; protein lipoylation via endogenous pathway; protein N(6)-(lipoyl)lysine from octanoyl-[acyl-carrier-protein]: step 2/2. Functionally, catalyzes the radical-mediated insertion of two sulfur atoms into the C-6 and C-8 positions of the octanoyl moiety bound to the lipoyl domains of lipoate-dependent enzymes, thereby converting the octanoylated domains into lipoylated derivatives. This chain is Lipoyl synthase, found in Cutibacterium acnes (strain DSM 16379 / KPA171202) (Propionibacterium acnes).